The following is a 232-amino-acid chain: Ubiquinone biosynthesis O-methyltransferase (232 aa).

S-adenosyl-L-methionine contacts are provided by arginine 36, glycine 55, aspartate 76, and methionine 120.

The protein belongs to the methyltransferase superfamily. UbiG/COQ3 family.

The enzyme catalyses a 3-demethylubiquinol + S-adenosyl-L-methionine = a ubiquinol + S-adenosyl-L-homocysteine + H(+). It catalyses the reaction a 3-(all-trans-polyprenyl)benzene-1,2-diol + S-adenosyl-L-methionine = a 2-methoxy-6-(all-trans-polyprenyl)phenol + S-adenosyl-L-homocysteine + H(+). It participates in cofactor biosynthesis; ubiquinone biosynthesis. In terms of biological role, O-methyltransferase that catalyzes the 2 O-methylation steps in the ubiquinone biosynthetic pathway. The protein is Ubiquinone biosynthesis O-methyltransferase of Burkholderia ambifaria (strain MC40-6).